The following is a 142-amino-acid chain: Small heat shock protein IbpB (142 aa).

A sHSP domain is found at 26-137 (SGESQSFPPY…PPQRIAINER (112 aa)).

Belongs to the small heat shock protein (HSP20) family. Homodimer. Forms homomultimers of about 100-150 subunits at optimal growth temperatures. Conformation changes to oligomers at high temperatures or high ionic concentrations. The decrease in size of the multimers is accompanied by an increase in chaperone activity.

It is found in the cytoplasm. In terms of biological role, associates with aggregated proteins, together with IbpA, to stabilize and protect them from irreversible denaturation and extensive proteolysis during heat shock and oxidative stress. Aggregated proteins bound to the IbpAB complex are more efficiently refolded and reactivated by the ATP-dependent chaperone systems ClpB and DnaK/DnaJ/GrpE. Its activity is ATP-independent. The chain is Small heat shock protein IbpB from Salmonella typhi.